The sequence spans 307 residues: Olfactory receptor 8K5 (307 aa).

Topologically, residues 1–25 (MGQHNLTVLTEFILMELTRRPELQI) are extracellular. A glycan (N-linked (GlcNAc...) asparagine) is linked at Asn5. Residues 26–46 (PLFGVFLVIYLITVVGNLTMI) traverse the membrane as a helical segment. The Cytoplasmic portion of the chain corresponds to 47-54 (ILTKLDSH). Residues 55-75 (LHTPMYFSIRHLAFVDLGNST) traverse the membrane as a helical segment. Topologically, residues 76–99 (VICPKVLANFVVDRNTISYYACAA) are extracellular. A disulfide bridge connects residues Cys97 and Cys189. The helical transmembrane segment at 100-120 (QLAFFLMFIISEFFILSAMAY) threads the bilayer. The Cytoplasmic portion of the chain corresponds to 121–139 (DRYVAICNPLLYYVIMSQR). The helical transmembrane segment at 140–160 (LCHVLVGIQYLYSTFQALMFT) threads the bilayer. The Extracellular portion of the chain corresponds to 161–197 (IKIFTLTFCGSNVISHFYCDDVPLLPMLCSNAQEIEL). Residues 198-217 (LSILFSVFNLISSFLIVLVS) traverse the membrane as a helical segment. Over 218–237 (YMLILLAICQMHSAEGRKKA) the chain is Cytoplasmic. The chain crosses the membrane as a helical span at residues 238–258 (FSTCGSHLTVVVVFYGSLLFM). Topologically, residues 259-271 (YMQPNSTHFFDTD) are extracellular. N-linked (GlcNAc...) asparagine glycosylation occurs at Asn263. The helical transmembrane segment at 272 to 292 (KMASVFYTLVIPMLNPLIYSL) threads the bilayer. The Cytoplasmic segment spans residues 293-307 (RNEEVKNAFYKLFEN).

This sequence belongs to the G-protein coupled receptor 1 family.

It is found in the cell membrane. Odorant receptor. This is Olfactory receptor 8K5 (OR8K5) from Homo sapiens (Human).